Here is a 220-residue protein sequence, read N- to C-terminus: Cytidylate kinase (220 aa).

Gly9–Thr17 is a binding site for ATP.

This sequence belongs to the cytidylate kinase family. Type 1 subfamily.

The protein localises to the cytoplasm. It catalyses the reaction CMP + ATP = CDP + ADP. The enzyme catalyses dCMP + ATP = dCDP + ADP. This Thermotoga neapolitana (strain ATCC 49049 / DSM 4359 / NBRC 107923 / NS-E) protein is Cytidylate kinase.